Reading from the N-terminus, the 166-residue chain is NAD(P)H-quinone oxidoreductase subunit I, chloroplastic (166 aa).

2 4Fe-4S ferredoxin-type domains span residues 55-84 (GRIH…VDWK) and 95-124 (LNYS…MTEE). [4Fe-4S] cluster contacts are provided by Cys-64, Cys-67, Cys-70, Cys-74, Cys-104, Cys-107, Cys-110, and Cys-114.

The protein belongs to the complex I 23 kDa subunit family. NDH is composed of at least 16 different subunits, 5 of which are encoded in the nucleus. [4Fe-4S] cluster serves as cofactor.

It is found in the plastid. The protein resides in the chloroplast thylakoid membrane. The enzyme catalyses a plastoquinone + NADH + (n+1) H(+)(in) = a plastoquinol + NAD(+) + n H(+)(out). It carries out the reaction a plastoquinone + NADPH + (n+1) H(+)(in) = a plastoquinol + NADP(+) + n H(+)(out). Functionally, NDH shuttles electrons from NAD(P)H:plastoquinone, via FMN and iron-sulfur (Fe-S) centers, to quinones in the photosynthetic chain and possibly in a chloroplast respiratory chain. The immediate electron acceptor for the enzyme in this species is believed to be plastoquinone. Couples the redox reaction to proton translocation, and thus conserves the redox energy in a proton gradient. In Calea megacephala, this protein is NAD(P)H-quinone oxidoreductase subunit I, chloroplastic.